Consider the following 464-residue polypeptide: Cysteine--tRNA ligase (464 aa).

Cys29 contacts Zn(2+). The short motif at Pro31–Asn41 is the 'HIGH' region element. Cys224, His249, and Glu253 together coordinate Zn(2+). The 'KMSKS' region motif lies at Lys282–Ser286. Residue Lys285 coordinates ATP.

This sequence belongs to the class-I aminoacyl-tRNA synthetase family. In terms of assembly, monomer. The cofactor is Zn(2+).

It is found in the cytoplasm. The catalysed reaction is tRNA(Cys) + L-cysteine + ATP = L-cysteinyl-tRNA(Cys) + AMP + diphosphate. This is Cysteine--tRNA ligase from Afipia carboxidovorans (strain ATCC 49405 / DSM 1227 / KCTC 32145 / OM5) (Oligotropha carboxidovorans).